A 230-amino-acid chain; its full sequence is uncharacterized protein (230 aa).

This sequence belongs to the transferase hexapeptide repeat family.

This is an uncharacterized protein from Escherichia coli O6:K15:H31 (strain 536 / UPEC).